A 325-amino-acid polypeptide reads, in one-letter code: N-acetyl-gamma-glutamyl-phosphate reductase (325 aa).

Residue Cys-131 is part of the active site.

Belongs to the NAGSA dehydrogenase family. Type 1 subfamily.

It is found in the cytoplasm. It catalyses the reaction N-acetyl-L-glutamate 5-semialdehyde + phosphate + NADP(+) = N-acetyl-L-glutamyl 5-phosphate + NADPH + H(+). It functions in the pathway amino-acid biosynthesis; L-arginine biosynthesis; N(2)-acetyl-L-ornithine from L-glutamate: step 3/4. In terms of biological role, catalyzes the NADPH-dependent reduction of N-acetyl-5-glutamyl phosphate to yield N-acetyl-L-glutamate 5-semialdehyde. The protein is N-acetyl-gamma-glutamyl-phosphate reductase of Methylobacterium sp. (strain 4-46).